Reading from the N-terminus, the 394-residue chain is C-19 steroid 1alpha-hydroxylase (394 aa).

Heme b is bound by residues His-81, Arg-85, Arg-281, Gly-335, His-338, and Cys-340.

Belongs to the cytochrome P450 family. Requires heme b as cofactor.

The catalysed reaction is testosterone + 2 reduced [2Fe-2S]-[ferredoxin] + O2 + 2 H(+) = 1alpha-hydroxytestosterone + 2 oxidized [2Fe-2S]-[ferredoxin] + H2O. It catalyses the reaction androst-4-ene-3,17-dione + 2 reduced [2Fe-2S]-[ferredoxin] + O2 + 2 H(+) = 1alpha-hydroxyandrost-4-ene-3,17-dione + 2 oxidized [2Fe-2S]-[ferredoxin] + H2O. Functionally, hydroxylase that can catalyze the in vitro conversion of the sesquiterpenoid nootkatone, a natural organic compound produced by some plants, to at least five hydrophilic products. The native ferredoxin reductase FdR_B and either Fdx2 or Fdx8 ferredoxins can act as the redox partners for the conversion of nootkatone. In addition, acts as a steroid 1alpha-hydroxylase, when associated in vitro with the surrogate redox partners bovine adrenodoxin (Adx) and adrenodoxin reductase (Adr). Acts on several C-19 steroid substrates, including testosterone and androstenedione, which are hydroxylated to 1alpha-hydroxytestosterone and 1alpha-hydroxyandrostenedione, respectively. Can use their derivatives testosterone-acetate and 11-oxoandrostenedione, but not vitamin D3 and 25-hydroxyvitamin D3. Also catalyzes the hydroxylation of the C-21 steroid 11-deoxycorticosterone to 1alpha-hydroxy-11-deoxycorticosterone. Catalyzes the hydroxylation of the C-21 steroid progesterone, leading to the formation of seven products: two major (1alpha-hydroxyprogesterone and 17alpha-hydroxyprogesterone) and five minor products. The sequence is that of C-19 steroid 1alpha-hydroxylase from Sorangium cellulosum (strain So ce56) (Polyangium cellulosum (strain So ce56)).